The following is an 80-amino-acid chain: Defensin-like protein 291 (80 aa).

An N-terminal signal peptide occupies residues 1–29; that stretch reads MAASKTTIFIVFVLCLSCTLLVNISGIQA. Disulfide bonds link Cys50-Cys70, Cys56-Cys75, and Cys62-Cys77.

It belongs to the DEFL family.

It localises to the secreted. This chain is Defensin-like protein 291, found in Arabidopsis thaliana (Mouse-ear cress).